A 42-amino-acid polypeptide reads, in one-letter code: Photosystem II reaction center protein J (42 aa).

The helical transmembrane segment at 10–30 (IPLWFIGVIAGIAALSIVGLF) threads the bilayer.

This sequence belongs to the PsbJ family. PSII is composed of 1 copy each of membrane proteins PsbA, PsbB, PsbC, PsbD, PsbE, PsbF, PsbH, PsbI, PsbJ, PsbK, PsbL, PsbM, PsbT, PsbX, PsbY, PsbZ, Psb30/Ycf12, at least 3 peripheral proteins of the oxygen-evolving complex and a large number of cofactors. It forms dimeric complexes.

It localises to the plastid. Its subcellular location is the chloroplast thylakoid membrane. In terms of biological role, one of the components of the core complex of photosystem II (PSII). PSII is a light-driven water:plastoquinone oxidoreductase that uses light energy to abstract electrons from H(2)O, generating O(2) and a proton gradient subsequently used for ATP formation. It consists of a core antenna complex that captures photons, and an electron transfer chain that converts photonic excitation into a charge separation. In Zygnema circumcarinatum (Green alga), this protein is Photosystem II reaction center protein J.